The following is a 224-amino-acid chain: Non-structural protein V (224 aa).

The segment covering 54-65 has biased composition (polar residues); the sequence is QKNIQHPTASHQ. 2 disordered regions span residues 54-94 and 150-172; these read QKNI…TQIP and TEFK…GHRR. Positions 170, 189, 193, 205, 207, 210, 214, and 217 each coordinate Zn(2+).

This sequence belongs to the paramyxoviruses V protein family. In terms of assembly, interacts with host IFIH1/MDA5 and DHX58/LGP2. Forms with host DDB1, CUL4A, STAT1, STAT2 and STAT3 the mumps virus V-dependent complex (VDC).

The protein resides in the virion. It localises to the host cytoplasm. In terms of biological role, plays an essential role in the inhibition of host immune response. Prevents the establishment of cellular antiviral state by blocking interferon-alpha/beta (IFN-alpha/beta) production and signaling pathway. Interacts with host IFIH1/MDA5 and DHX58/LGP2 to inhibit the transduction pathway involved in the activation of IFN-beta promoter, thus protecting the virus against cell antiviral state. Blocks the type I and II interferon signaling pathways by interacting with host STAT1, STAT2 and STAT3, and mediating their ubiquitination and subsequent proteasomal degradation. The sequence is that of Non-structural protein V from Homo sapiens (Human).